The chain runs to 410 residues: Arginine deiminase (410 aa).

Cysteine 400 (amidino-cysteine intermediate) is an active-site residue.

The protein belongs to the arginine deiminase family.

It localises to the cytoplasm. It carries out the reaction L-arginine + H2O = L-citrulline + NH4(+). It participates in amino-acid degradation; L-arginine degradation via ADI pathway; carbamoyl phosphate from L-arginine: step 1/2. The polypeptide is Arginine deiminase (arcA) (Lactococcus lactis subsp. lactis (strain IL1403) (Streptococcus lactis)).